We begin with the raw amino-acid sequence, 217 residues long: Large ribosomal subunit protein uL4 (217 aa).

The tract at residues 46 to 102 is disordered; sequence KRQGTHSAKTRAEVSGGGRKPFRQKGTGRARQGSIRAPHFTGGGISHGPKPRDYSQR.

The protein belongs to the universal ribosomal protein uL4 family. Part of the 50S ribosomal subunit.

Its function is as follows. One of the primary rRNA binding proteins, this protein initially binds near the 5'-end of the 23S rRNA. It is important during the early stages of 50S assembly. It makes multiple contacts with different domains of the 23S rRNA in the assembled 50S subunit and ribosome. Forms part of the polypeptide exit tunnel. In Corynebacterium diphtheriae (strain ATCC 700971 / NCTC 13129 / Biotype gravis), this protein is Large ribosomal subunit protein uL4.